The primary structure comprises 143 residues: ATP synthase epsilon chain (143 aa).

It belongs to the ATPase epsilon chain family. In terms of assembly, F-type ATPases have 2 components, CF(1) - the catalytic core - and CF(0) - the membrane proton channel. CF(1) has five subunits: alpha(3), beta(3), gamma(1), delta(1), epsilon(1). CF(0) has three main subunits: a, b and c.

It is found in the cell membrane. Functionally, produces ATP from ADP in the presence of a proton gradient across the membrane. The chain is ATP synthase epsilon chain from Lacticaseibacillus casei (strain BL23) (Lactobacillus casei).